The primary structure comprises 360 residues: 3-dehydroquinate synthase (360 aa).

NAD(+)-binding positions include 69–74 (DGEAYK), 103–107 (GVIGD), 127–128 (TT), K140, K149, and 167–170 (CLQT). Zn(2+)-binding residues include E182, H245, and H262.

Belongs to the sugar phosphate cyclases superfamily. Dehydroquinate synthase family. Requires Co(2+) as cofactor. It depends on Zn(2+) as a cofactor. NAD(+) is required as a cofactor.

It is found in the cytoplasm. It catalyses the reaction 7-phospho-2-dehydro-3-deoxy-D-arabino-heptonate = 3-dehydroquinate + phosphate. It functions in the pathway metabolic intermediate biosynthesis; chorismate biosynthesis; chorismate from D-erythrose 4-phosphate and phosphoenolpyruvate: step 2/7. In terms of biological role, catalyzes the conversion of 3-deoxy-D-arabino-heptulosonate 7-phosphate (DAHP) to dehydroquinate (DHQ). The chain is 3-dehydroquinate synthase from Aeromonas hydrophila subsp. hydrophila (strain ATCC 7966 / DSM 30187 / BCRC 13018 / CCUG 14551 / JCM 1027 / KCTC 2358 / NCIMB 9240 / NCTC 8049).